A 385-amino-acid polypeptide reads, in one-letter code: MTDEIGIVTPQKLHVSTPLEMVSGSTLPEYDLAYETYGSLNADKSNAILICHALSGNHHVAGQYEGESTRGWWDGYIGPGKPIDTNRFFVVCSNNLGGCHGSTGPASINPLTGKVYGPDFPIVTCKDWVHSQNTLRQHLEIDAWAAVIGGSMGGMQVLQWTIDFPDQIRHAIVIASAPKLSAQNIAFNEVARRAIMTDPDFHDGRFIEAGTTPKRGLALARMLGHLTYLSDDMMGSKFGRELREGKLNYNFDVEFQVESYLRYQGEKFATKQNFDANTYLLMTKALDYFDPAADFDDDLSKALSGATAKFLIISFTTDWRFSPERSHEIVKALLDNDADISYAEVNSQHGHDAFLLPNDHYEGVFRAYMKRIHAELNHTSLQEGE.

The AB hydrolase-1 domain occupies 46-355 (NAILICHALS…NSQHGHDAFL (310 aa)). Serine 151 acts as the Nucleophile in catalysis. Residue arginine 221 coordinates substrate. Catalysis depends on residues aspartate 318 and histidine 351. Aspartate 352 contacts substrate.

This sequence belongs to the AB hydrolase superfamily. MetX family. As to quaternary structure, homodimer.

It is found in the cytoplasm. It carries out the reaction L-homoserine + succinyl-CoA = O-succinyl-L-homoserine + CoA. The protein operates within amino-acid biosynthesis; L-methionine biosynthesis via de novo pathway; O-succinyl-L-homoserine from L-homoserine: step 1/1. Functionally, transfers a succinyl group from succinyl-CoA to L-homoserine, forming succinyl-L-homoserine. The polypeptide is Homoserine O-succinyltransferase (Hydrogenovibrio crunogenus (strain DSM 25203 / XCL-2) (Thiomicrospira crunogena)).